The chain runs to 515 residues: 2-isopropylmalate synthase (515 aa).

The region spanning V4–Q264 is the Pyruvate carboxyltransferase domain. Mn(2+) is bound by residues D13, H201, H203, and N237. The regulatory domain stretch occupies residues E390 to I515.

It belongs to the alpha-IPM synthase/homocitrate synthase family. LeuA type 1 subfamily. As to quaternary structure, homodimer. The cofactor is Mn(2+).

It localises to the cytoplasm. The enzyme catalyses 3-methyl-2-oxobutanoate + acetyl-CoA + H2O = (2S)-2-isopropylmalate + CoA + H(+). Its pathway is amino-acid biosynthesis; L-leucine biosynthesis; L-leucine from 3-methyl-2-oxobutanoate: step 1/4. Its function is as follows. Catalyzes the condensation of the acetyl group of acetyl-CoA with 3-methyl-2-oxobutanoate (2-ketoisovalerate) to form 3-carboxy-3-hydroxy-4-methylpentanoate (2-isopropylmalate). This Halothermothrix orenii (strain H 168 / OCM 544 / DSM 9562) protein is 2-isopropylmalate synthase.